A 115-amino-acid polypeptide reads, in one-letter code: T cell receptor beta variable 11-2 (115 aa).

The signal sequence occupies residues 1-21 (MGTRLLCWAALCLLGAELTEA). The Ig-like domain occupies 22–115 (GVAQSPRYKI…SAVYLCASSL (94 aa)). The cysteines at positions 42 and 111 are disulfide-linked.

Alpha-beta TR is a heterodimer composed of an alpha and beta chain; disulfide-linked. The alpha-beta TR is associated with the transmembrane signaling CD3 coreceptor proteins to form the TR-CD3 (TcR or TCR). The assembly of alpha-beta TR heterodimers with CD3 occurs in the endoplasmic reticulum where a single alpha-beta TR heterodimer associates with one CD3D-CD3E heterodimer, one CD3G-CD3E heterodimer and one CD247 homodimer forming a stable octameric structure. CD3D-CD3E and CD3G-CD3E heterodimers preferentially associate with TR alpha and TR beta chains, respectively. The association of the CD247 homodimer is the last step of TcR assembly in the endoplasmic reticulum and is required for transport to the cell surface.

Its subcellular location is the cell membrane. V region of the variable domain of T cell receptor (TR) beta chain that participates in the antigen recognition. Alpha-beta T cell receptors are antigen specific receptors which are essential to the immune response and are present on the cell surface of T lymphocytes. Recognize peptide-major histocompatibility (MH) (pMH) complexes that are displayed by antigen presenting cells (APC), a prerequisite for efficient T cell adaptive immunity against pathogens. Binding of alpha-beta TR to pMH complex initiates TR-CD3 clustering on the cell surface and intracellular activation of LCK that phosphorylates the ITAM motifs of CD3G, CD3D, CD3E and CD247 enabling the recruitment of ZAP70. In turn ZAP70 phosphorylates LAT, which recruits numerous signaling molecules to form the LAT signalosome. The LAT signalosome propagates signal branching to three major signaling pathways, the calcium, the mitogen-activated protein kinase (MAPK) kinase and the nuclear factor NF-kappa-B (NF-kB) pathways, leading to the mobilization of transcription factors that are critical for gene expression and essential for T cell growth and differentiation. The T cell repertoire is generated in the thymus, by V-(D)-J rearrangement. This repertoire is then shaped by intrathymic selection events to generate a peripheral T cell pool of self-MH restricted, non-autoaggressive T cells. Post-thymic interaction of alpha-beta TR with the pMH complexes shapes TR structural and functional avidity. The polypeptide is T cell receptor beta variable 11-2 (Homo sapiens (Human)).